A 204-amino-acid chain; its full sequence is MPINTFCKISLFICALFCSTVTLANPNVYVEGPSIENVMRASSYVSYTYRTEAKRHQWVGNDDLFFIRLSSIDTFGDQRSALIASLSPHSYSIERVSTNCKTKDTIINTRTRYDVNGKVLESNKEEEKIGRPIPDSYLAEAVIVMCDALAIIPANPNVDGEKITASAPFMNVINEHVRAKGVTRRAITVEQIEAHFKTTLNQRK.

Positions methionine 1–alanine 24 are cleaved as a signal peptide.

This is an uncharacterized protein from Pasteurella multocida (strain Pm70).